The primary structure comprises 463 residues: tRNA modification GTPase MnmE (463 aa).

Positions 27, 92, and 131 each coordinate (6S)-5-formyl-5,6,7,8-tetrahydrofolate. The 153-residue stretch at 234–386 (GIKLAIVGKP…LEDHLLKIYS (153 aa)) folds into the TrmE-type G domain. Residue N244 coordinates K(+). GTP-binding positions include 244 to 249 (NVGKSS), 263 to 269 (TNVAGTT), and 288 to 291 (DTAG). Residue S248 participates in Mg(2+) binding. T263, V265, and T268 together coordinate K(+). T269 provides a ligand contact to Mg(2+). K463 contacts (6S)-5-formyl-5,6,7,8-tetrahydrofolate.

The protein belongs to the TRAFAC class TrmE-Era-EngA-EngB-Septin-like GTPase superfamily. TrmE GTPase family. Homodimer. Heterotetramer of two MnmE and two MnmG subunits. The cofactor is K(+).

The protein resides in the cytoplasm. In terms of biological role, exhibits a very high intrinsic GTPase hydrolysis rate. Involved in the addition of a carboxymethylaminomethyl (cmnm) group at the wobble position (U34) of certain tRNAs, forming tRNA-cmnm(5)s(2)U34. The sequence is that of tRNA modification GTPase MnmE from Mycoplasmopsis synoviae (strain 53) (Mycoplasma synoviae).